Here is a 122-residue protein sequence, read N- to C-terminus: Putative iron-sulfur cluster insertion protein ErpA (122 aa).

Iron-sulfur cluster contacts are provided by Cys50, Cys114, and Cys116.

The protein belongs to the HesB/IscA family. Homodimer. It depends on iron-sulfur cluster as a cofactor.

Required for insertion of 4Fe-4S clusters. This chain is Putative iron-sulfur cluster insertion protein ErpA, found in Cupriavidus metallidurans (strain ATCC 43123 / DSM 2839 / NBRC 102507 / CH34) (Ralstonia metallidurans).